Reading from the N-terminus, the 142-residue chain is Peptide methionine sulfoxide reductase MsrB (142 aa).

Positions 2–125 (IKKDKNELNE…NSAAIQFIPY (124 aa)) constitute a MsrB domain. Catalysis depends on cysteine 114, which acts as the Nucleophile.

It belongs to the MsrB Met sulfoxide reductase family.

It carries out the reaction L-methionyl-[protein] + [thioredoxin]-disulfide + H2O = L-methionyl-(R)-S-oxide-[protein] + [thioredoxin]-dithiol. The sequence is that of Peptide methionine sulfoxide reductase MsrB from Staphylococcus haemolyticus (strain JCSC1435).